A 258-amino-acid chain; its full sequence is MQEETFYSVRMRASMNGSHEDGGKHISGGERLIPFHEMKHTVNALLEKGLSHSRGKPDFMQIQFEEVYESIKTIQPLPVHTNEVSCPEEGQKLARLLLEKEGVSRDVIEKAYEQIPEWSDVRGAVLFDIHTGKRMDQTKEKGVRVSRMDWPDANFEKWALHSHVPAHSRIKEALALASKVSWHPAAVAELCWSDDPDYITGYVAGKKMGYQRITAMKEYGTEEGCRVFFIDGSNDVNTYIHDLEKQPILIEWEEDHDS.

The protein belongs to the BioW family. In terms of assembly, homodimer. The cofactor is Mg(2+).

It carries out the reaction heptanedioate + ATP + CoA = 6-carboxyhexanoyl-CoA + AMP + diphosphate. Its pathway is metabolic intermediate metabolism; pimeloyl-CoA biosynthesis; pimeloyl-CoA from pimelate: step 1/1. Its function is as follows. Catalyzes the transformation of pimelate into pimeloyl-CoA with concomitant hydrolysis of ATP to AMP. The protein is 6-carboxyhexanoate--CoA ligase of Bacillus subtilis (strain BSn5).